The chain runs to 894 residues: Tyrosine-protein kinase receptor UFO (894 aa).

The signal sequence occupies residues 1–25; it reads MAWRCPRMGRVPLAWCLALCGWACM. An interaction with GAS6 region spans residues 26 to 92; the sequence is APRGTQAEES…QTQVPLGEDE (67 aa). Over 26–451 the chain is Extracellular; that stretch reads APRGTQAEES…STPAFSWPWW (426 aa). Ig-like C2-type domains lie at 27–128 and 139–222; these read PRGT…TFVS and PYFL…ATIT. N-linked (GlcNAc...) asparagine glycosylation is present at Asn-43. Cys-56 and Cys-117 are disulfide-bonded. Asn-157 and Asn-198 each carry an N-linked (GlcNAc...) asparagine glycan. The cysteines at positions 160 and 205 are disulfide-linked. 2 consecutive Fibronectin type-III domains span residues 227 to 331 and 336 to 428; these read QPRN…TPEG and PPEN…AWRP. N-linked (GlcNAc...) asparagine glycosylation is found at Asn-339, Asn-345, and Asn-401. A helical transmembrane segment spans residues 452–472; it reads YVLLGAVVAAACVLILALFLV. Residues 473-894 lie on the Cytoplasmic side of the membrane; the sequence is HRRKKETRYG…PAAPGQEDGA (422 aa). The Protein kinase domain maps to 536-807; sequence VALGKTLGEG…ELREDLENTL (272 aa). ATP is bound by residues 542 to 550 and Lys-567; that span reads LGEGEFGAV. Asp-672 serves as the catalytic Proton acceptor. 3 positions are modified to phosphotyrosine; by autocatalysis: Tyr-703, Tyr-779, and Tyr-821. 2 disordered regions span residues 823–853 and 866–894; these read NMDE…DSCS and YVLC…EDGA. Residue Tyr-866 is modified to Phosphotyrosine; by autocatalysis. Ser-884 bears the Phosphoserine mark.

Belongs to the protein kinase superfamily. Tyr protein kinase family. AXL/UFO subfamily. In terms of assembly, heterodimer and heterotetramer with ligand GAS6. Interacts with CBL, GRB2, LCK, NCK2, PIK3R1, PIK3R2, PIK3R3, PLCG1, SOCS1 and TNS2. Part of a complex including AXL, TNK2 and GRB2, in which GRB2 promotes AXL recruitment by TNK2. Monoubiquitinated upon GAS6-binding. A very small proportion of the receptor could be subjected to polyubiquitination in a very transient fashion. In terms of processing, phosphorylated at tyrosine residues by autocatalysis, which activates kinase activity. In terms of tissue distribution, highly expressed in metastatic colon tumors. Expressed in primary colon tumors. Weakly expressed in normal colon tissue.

It localises to the cell membrane. It carries out the reaction L-tyrosyl-[protein] + ATP = O-phospho-L-tyrosyl-[protein] + ADP + H(+). With respect to regulation, activated by GAS6-binding and subsequent autophosphorylation. Functionally, receptor tyrosine kinase that transduces signals from the extracellular matrix into the cytoplasm by binding growth factor GAS6 and which is thus regulating many physiological processes including cell survival, cell proliferation, migration and differentiation. Ligand binding at the cell surface induces dimerization and autophosphorylation of AXL. Following activation by ligand, AXL binds and induces tyrosine phosphorylation of PI3-kinase subunits PIK3R1, PIK3R2 and PIK3R3; but also GRB2, PLCG1, LCK and PTPN11. Other downstream substrate candidates for AXL are CBL, NCK2, SOCS1 and TNS2. Recruitment of GRB2 and phosphatidylinositol 3 kinase regulatory subunits by AXL leads to the downstream activation of the AKT kinase. GAS6/AXL signaling plays a role in various processes such as endothelial cell survival during acidification by preventing apoptosis, optimal cytokine signaling during human natural killer cell development, hepatic regeneration, gonadotropin-releasing hormone neuron survival and migration, platelet activation, or regulation of thrombotic responses. Also plays an important role in inhibition of Toll-like receptors (TLRs)-mediated innate immune response. In terms of biological role, (Microbial infection) Acts as a receptor for lassa virus and lymphocytic choriomeningitis virus, possibly through GAS6 binding to phosphatidyl-serine at the surface of virion envelope. Its function is as follows. (Microbial infection) Acts as a receptor for Ebolavirus, possibly through GAS6 binding to phosphatidyl-serine at the surface of virion envelope. (Microbial infection) Promotes Zika virus entry in glial cells, Sertoli cells and astrocytes. Additionally, Zika virus potentiates AXL kinase activity to antagonize type I interferon signaling and thereby promotes infection. Interferon signaling inhibition occurs via an SOCS1-dependent mechanism. This is Tyrosine-protein kinase receptor UFO (AXL) from Homo sapiens (Human).